Here is a 301-residue protein sequence, read N- to C-terminus: tRNA pseudouridine synthase B (301 aa).

The Nucleophile role is filled by aspartate 47.

This sequence belongs to the pseudouridine synthase TruB family. Type 1 subfamily.

It carries out the reaction uridine(55) in tRNA = pseudouridine(55) in tRNA. Functionally, responsible for synthesis of pseudouridine from uracil-55 in the psi GC loop of transfer RNAs. This is tRNA pseudouridine synthase B from Cereibacter sphaeroides (strain ATCC 17023 / DSM 158 / JCM 6121 / CCUG 31486 / LMG 2827 / NBRC 12203 / NCIMB 8253 / ATH 2.4.1.) (Rhodobacter sphaeroides).